Here is a 347-residue protein sequence, read N- to C-terminus: DNA-directed RNA polymerase subunit alpha (347 aa).

The alpha N-terminal domain (alpha-NTD) stretch occupies residues 1–226 (MLISQRPTLS…ELFGLARELN (226 aa)). Residues 243 to 347 (HIASFALPID…SQDYAETEQL (105 aa)) are alpha C-terminal domain (alpha-CTD). A disordered region spans residues 326–347 (TTGTWSTDGAYDSQDYAETEQL).

Belongs to the RNA polymerase alpha chain family. In terms of assembly, homodimer. The RNAP catalytic core consists of 2 alpha, 1 beta, 1 beta' and 1 omega subunit. When a sigma factor is associated with the core the holoenzyme is formed, which can initiate transcription.

The catalysed reaction is RNA(n) + a ribonucleoside 5'-triphosphate = RNA(n+1) + diphosphate. DNA-dependent RNA polymerase catalyzes the transcription of DNA into RNA using the four ribonucleoside triphosphates as substrates. The polypeptide is DNA-directed RNA polymerase subunit alpha (Mycobacterium leprae (strain TN)).